Reading from the N-terminus, the 449-residue chain is MSYLNNPAVVMDNGTGLTKLGFAGNDSPSWVFPTAIATAAPSNTKKSSGVGAPSAVSNEASYFGNSTSATNFNGATGGLLSNNLSGKRGTEDLDFYIGNEALVASQGPSYSLSYPIRHGQVENWDHMERFWENSIFKYLRTEPEDHFFLLTEPPLNPPENREQVAEIFFESFNCAGLYIAVQAVLALAASWTSSKVTDRSLTGTVIDSGDGVTHVIPVAEGYVIGSAIKNIPIAGRDITLFIQSLLRERGEADTSLRTAEKIKQEYCYVCPDIVKEFNKFDKDPSKFAQFVVENQEKTRRKVVDIGYERFLAPEIFFNPEIASSDFLTPLPTVVDQTIQACPIDVRKGLYNNIVLSGGSTMFKDFGRRLQRDLKSIVNNRIAQSELLSGTKSTGVDVSVISHRKQRNAVWFGGSLLAQTAEFKGYCHTKKDYEEYGPEIVRNFSLFNMV.

The protein belongs to the actin family. ARP3 subfamily. In terms of assembly, component of the Arp2/3 complex composed of ARP2, ARP3, ARC40/p41-ARC, ARC35/p34-ARC, ARC18/p21-ARC, ARC19/p20-ARC and ARC16/p16-ARC.

The protein resides in the cytoplasm. It localises to the cytoskeleton. The protein localises to the actin patch. Functions as ATP-binding component of the Arp2/3 complex which is involved in regulation of actin polymerization and together with an activating nucleation-promoting factor (NPF) mediates the formation of branched actin networks. Seems to contact the pointed end of the daughter actin filament. The sequence is that of Actin-related protein 3 (ARP3) from Saccharomyces cerevisiae (strain ATCC 204508 / S288c) (Baker's yeast).